The sequence spans 273 residues: MTDIHQLWIAAILGLVEGLTEFLPVSSTGHMILVGHLLGFEGNKAETFEVVIQLGSILAVVVMFWRRLFGLIGIHFGEVPHEGSGQGRLTLIHILLGMVPAVVIGLLLHDQIKTLFNPVNVMYALVVGGVLLIAAELLKPKRPKSPGVDDITYRQAFMIGCFQCLALWPGFSRSGATISGGMLVGVSRYAASEFSFLLAVPMMIGATGLDLYKSMGFLSMADFPMFAVGFVTAFIVALIAIKSFLHIIKRISFIPFAIYRFIVAAAVYALFVL.

8 helical membrane-spanning segments follow: residues 7-27 (LWIA…PVSS), 45-65 (AETF…VMFW), 89-109 (LTLI…LLLH), 115-135 (LFNP…LIAA), 152-171 (TYRQ…WPGF), 189-209 (YAAS…ATGL), 221-241 (ADFP…LIAI), and 253-273 (FIPF…LFVL).

This sequence belongs to the UppP family.

It is found in the cell inner membrane. It carries out the reaction di-trans,octa-cis-undecaprenyl diphosphate + H2O = di-trans,octa-cis-undecaprenyl phosphate + phosphate + H(+). Functionally, catalyzes the dephosphorylation of undecaprenyl diphosphate (UPP). Confers resistance to bacitracin. This is Undecaprenyl-diphosphatase from Erwinia tasmaniensis (strain DSM 17950 / CFBP 7177 / CIP 109463 / NCPPB 4357 / Et1/99).